The primary structure comprises 784 residues: Receptor-like protein 38 (784 aa).

The signal sequence occupies residues 1 to 30 (MIRSQSYCFLGITITIYFFFCLLPLPNTFA). The Extracellular segment spans residues 31 to 752 (SPPTQSLCRH…SELEEPVLNW (722 aa)). LRR repeat units lie at residues 109–133 (LQHLTHLDLSNCNLQGEIPSSIENL), 134–157 (SHLTHLDLSTNHLVGEVPASIGNL), 158–180 (NQLEYIDLRGNHLRGNIPTSFAN), 182–204 (TKLSLLDLHENNFTGGDIVLSNL), and 205–227 (TSLAILDLSSNHFKSFFSADLSG). N-linked (GlcNAc...) asparagine glycosylation is present at asparagine 132. 3 N-linked (GlcNAc...) asparagine glycosylation sites follow: asparagine 180, asparagine 193, and asparagine 203. The LRR 6; degenerate repeat unit spans residues 228–251 (LHNLEQIFGNENSFVGLFPASLLK). LRR repeat units follow at residues 252 to 276 (ISSLDKIQLSQNQFEGPIDFGNTSS), 278 to 301 (SRLTMLDISHNNFIGRVPSSLSKL), 302 to 324 (VNLELLDLSHNNFRGLSPRSISK), 326 to 349 (VNLTSLDISYNKLEGQVPYFIWKP), 351 to 373 (NLQSVDLSHNSFFDLGKSVEVVN), 374 to 400 (GAKLVGLNLGSNSLQGPIPQWICNFRF), 402 to 422 (FFLDLSDNRFTGSIPQCLKNS), 423 to 446 (TDFNTLNLRNNSLSGFLPELCMDS), 447 to 470 (TMLRSLDVSYNNFVGKLPKSLMNC), and 472 to 496 (DMEFLNVRGNKIKDTFPFWLGSRKS). Asparagine 273 carries N-linked (GlcNAc...) asparagine glycosylation. A glycan (N-linked (GlcNAc...) asparagine) is linked at asparagine 327. Asparagine 421 and asparagine 432 each carry an N-linked (GlcNAc...) asparagine glycan. The stretch at 497–518 (LMVLVLRSNAFYGPVYNSTTYL) is one LRR 17; degenerate repeat. 3 N-linked (GlcNAc...) asparagine glycosylation sites follow: asparagine 513, asparagine 544, and asparagine 562. The stretch at 520–544 (FPRLSIIDISNNDFVGSLPQDYFAN) is one LRR 18 repeat. LRR repeat units lie at residues 608–632 (FRGFKVIDFSGNRFSGHIPRSIGLL), 633–656 (SELLHLNLSGNAFTGNIPPSLANI), 657–680 (TNLETLDLSRNNLSGEIPRSLGNL), and 682–705 (FLSNINFSHNHLQGFVPRSTQFGT). N-linked (GlcNAc...) asparagine glycosylation is found at asparagine 639, asparagine 655, asparagine 668, asparagine 679, asparagine 687, and asparagine 707. Residues 753–773 (IAAAIAFGPGVFCGFVIGHIF) form a helical membrane-spanning segment. Over 774 to 784 (TSYKHLWFIAR) the chain is Cytoplasmic.

It belongs to the RLP family.

The protein localises to the cell membrane. The polypeptide is Receptor-like protein 38 (Arabidopsis thaliana (Mouse-ear cress)).